The following is a 188-amino-acid chain: Putative manganese efflux pump MntP (188 aa).

6 helical membrane-spanning segments follow: residues 3 to 23, 41 to 61, 62 to 82, 106 to 128, 143 to 163, and 168 to 188; these read ISAT…ASIG, LIFG…GMLA, SQFI…FLGG, WILV…GLAF, ATLI…PLLG, and ILGG…HFAG.

Belongs to the MntP (TC 9.B.29) family.

The protein resides in the cell inner membrane. Its function is as follows. Probably functions as a manganese efflux pump. This is Putative manganese efflux pump MntP from Enterobacter sp. (strain 638).